The chain runs to 141 residues: Nucleoside diphosphate kinase (141 aa).

The ATP site is built by Lys11, Phe59, Arg87, Thr93, Arg104, and Asn114. Residue His117 is the Pros-phosphohistidine intermediate of the active site.

Belongs to the NDK family. Homotetramer. Requires Mg(2+) as cofactor.

The protein resides in the cytoplasm. It carries out the reaction a 2'-deoxyribonucleoside 5'-diphosphate + ATP = a 2'-deoxyribonucleoside 5'-triphosphate + ADP. It catalyses the reaction a ribonucleoside 5'-diphosphate + ATP = a ribonucleoside 5'-triphosphate + ADP. Major role in the synthesis of nucleoside triphosphates other than ATP. The ATP gamma phosphate is transferred to the NDP beta phosphate via a ping-pong mechanism, using a phosphorylated active-site intermediate. This Paraburkholderia xenovorans (strain LB400) protein is Nucleoside diphosphate kinase.